A 123-amino-acid chain; its full sequence is WAP four-disulfide core domain protein 2 (123 aa).

A signal peptide spans 1–28; the sequence is MPASRLVPLGAVLLLGLLLLLELPPVTG. 2 consecutive WAP domains span residues 30–71 and 74–122; these read GADK…SAIC and PNEK…VTPN. 8 cysteine pairs are disulfide-bonded: Cys37–Cys63, Cys46–Cys67, Cys50–Cys62, Cys56–Cys71, Cys81–Cys109, Cys92–Cys113, Cys96–Cys108, and Cys102–Cys118. Asn45 carries an N-linked (GlcNAc...) asparagine glycan.

Homotrimer; disulfide-linked. As to expression, epididymis.

The protein resides in the secreted. Broad range protease inhibitor. In Oryctolagus cuniculus (Rabbit), this protein is WAP four-disulfide core domain protein 2 (WFDC2).